The sequence spans 194 residues: Isopentenyl-diphosphate Delta-isomerase (194 aa).

Residues H23 and H30 each contribute to the Mn(2+) site. Residues 28–162 (PLHLAFSCYV…TTDISPWCRQ (135 aa)) enclose the Nudix hydrolase domain. The active site involves C65. Mn(2+) is bound at residue H67. Position 85 (E85) interacts with Mg(2+). 2 residues coordinate Mn(2+): E112 and E114. E114 is an active-site residue.

The protein belongs to the IPP isomerase type 1 family. Mg(2+) serves as cofactor. Requires Mn(2+) as cofactor.

The protein localises to the cytoplasm. It carries out the reaction isopentenyl diphosphate = dimethylallyl diphosphate. The protein operates within isoprenoid biosynthesis; dimethylallyl diphosphate biosynthesis; dimethylallyl diphosphate from isopentenyl diphosphate: step 1/1. In terms of biological role, catalyzes the 1,3-allylic rearrangement of the homoallylic substrate isopentenyl (IPP) to its highly electrophilic allylic isomer, dimethylallyl diphosphate (DMAPP). This Saccharopolyspora erythraea (strain ATCC 11635 / DSM 40517 / JCM 4748 / NBRC 13426 / NCIMB 8594 / NRRL 2338) protein is Isopentenyl-diphosphate Delta-isomerase.